A 385-amino-acid chain; its full sequence is ATP phosphoribosyltransferase regulatory subunit (385 aa).

The protein belongs to the class-II aminoacyl-tRNA synthetase family. HisZ subfamily. As to quaternary structure, heteromultimer composed of HisG and HisZ subunits.

The protein localises to the cytoplasm. It functions in the pathway amino-acid biosynthesis; L-histidine biosynthesis; L-histidine from 5-phospho-alpha-D-ribose 1-diphosphate: step 1/9. In terms of biological role, required for the first step of histidine biosynthesis. May allow the feedback regulation of ATP phosphoribosyltransferase activity by histidine. This Bordetella avium (strain 197N) protein is ATP phosphoribosyltransferase regulatory subunit.